The sequence spans 267 residues: Heme-containing CO-sensing transcriptional regulator RcoM 2 (267 aa).

The PAS domain occupies 15–86 (RAETFQHKLE…KSRDKLRFLL (72 aa)). Heme is bound by residues His74 and Met104. An HTH LytTR-type domain is found at 161–266 (IPVYRKSRVI…TAQLKELLGV (106 aa)).

It depends on heme as a cofactor.

Its subcellular location is the cytoplasm. Its function is as follows. One-component, b-type heme-containing aerobic sensor and transcriptional regulator that responds to CO by activating the expression of the oxidation operon cox. The chain is Heme-containing CO-sensing transcriptional regulator RcoM 2 (rcoM2) from Paraburkholderia xenovorans (strain LB400).